Reading from the N-terminus, the 238-residue chain is Large ribosomal subunit protein bL17m (238 aa).

It belongs to the bacterial ribosomal protein bL17 family. As to quaternary structure, component of the mitochondrial large ribosomal subunit (mt-LSU). Mature yeast 74S mitochondrial ribosomes consist of a small (37S) and a large (54S) subunit. The 37S small subunit contains a 15S ribosomal RNA (15S mt-rRNA) and 34 different proteins. The 54S large subunit contains a 21S rRNA (21S mt-rRNA) and 46 different proteins.

Its subcellular location is the mitochondrion. Functionally, component of the mitochondrial ribosome (mitoribosome), a dedicated translation machinery responsible for the synthesis of mitochondrial genome-encoded proteins, including at least some of the essential transmembrane subunits of the mitochondrial respiratory chain. The mitoribosomes are attached to the mitochondrial inner membrane and translation products are cotranslationally integrated into the membrane. In Saccharomyces cerevisiae (strain ATCC 204508 / S288c) (Baker's yeast), this protein is Large ribosomal subunit protein bL17m (MRPL8).